The sequence spans 160 residues: MGKIALQLKATLENVTNLRPVGEDFRWYLKMKCGNCGEISEKWQYIRLMDSVALKGGRGSASMVQKCKLCARENSIDILSSTIKAYNAEDNEKFKTIVEFECRGLEPVDFQPQAGFAADGVESGTVFSDINLQEKDWTDYDEKAQESVGIFEVTHQFVKC.

Zn(2+) is bound by residues C33, C36, C67, and C70. S75 is modified (phosphoserine).

The protein belongs to the UPF0587 family. As to quaternary structure, monomer.

This is CXXC motif containing zinc binding protein (Czib) from Mus musculus (Mouse).